A 509-amino-acid polypeptide reads, in one-letter code: Seipin-3 (509 aa).

The segment at 33–73 is disordered; sequence YDCLNSSPPANLRRRRLPMDTDSSSSSSTSSLESCEKRSTV. The segment covering 52 to 63 has biased composition (low complexity); sequence DTDSSSSSSTSS. A run of 2 helical transmembrane segments spans residues 238–258 and 455–475; these read LFCA…AFMI and LFVW…LVFF.

The protein belongs to the seipin family. In terms of tissue distribution, expressed in seeds, seedlings, leaves, stems and roots. Not detected in flowers.

The protein localises to the endoplasmic reticulum membrane. Involved in lipid metabolism and lipid droplet (LD) morphology, number, and size. Supports the formation of small-sized LDs and modulates triacylglycerol accumulation. Induces probably a reorganization of the endoplasmic reticulum into LD-forming domains. The sequence is that of Seipin-3 from Arabidopsis thaliana (Mouse-ear cress).